The primary structure comprises 86 residues: Progonadoliberin IIA (86 aa).

The signal sequence occupies residues 1–24 (MVHICRLFVVMGMLLCLSAQFASS). A Pyrrolidone carboxylic acid modification is found at glutamine 25. At glycine 34 the chain carries Glycine amide.

This sequence belongs to the GnRH family. In terms of tissue distribution, olfactory bulbs, hypothalamus and telencephalon, midbrain and posterior brain areas.

It localises to the secreted. In terms of biological role, stimulates the secretion of gonadotropins. This is Progonadoliberin IIA (gnrh2a) from Carassius auratus (Goldfish).